A 404-amino-acid polypeptide reads, in one-letter code: Cysteine desulfurase IscS (404 aa).

Residues 75–76 (AT), asparagine 155, glutamine 183, and 203–205 (TSH) contribute to the pyridoxal 5'-phosphate site. The residue at position 206 (lysine 206) is an N6-(pyridoxal phosphate)lysine. Position 243 (threonine 243) interacts with pyridoxal 5'-phosphate. The active-site Cysteine persulfide intermediate is cysteine 328. Position 328 (cysteine 328) interacts with [2Fe-2S] cluster.

It belongs to the class-V pyridoxal-phosphate-dependent aminotransferase family. NifS/IscS subfamily. As to quaternary structure, homodimer. Forms a heterotetramer with IscU, interacts with other sulfur acceptors. Requires pyridoxal 5'-phosphate as cofactor.

It localises to the cytoplasm. It carries out the reaction (sulfur carrier)-H + L-cysteine = (sulfur carrier)-SH + L-alanine. Its pathway is cofactor biosynthesis; iron-sulfur cluster biosynthesis. Its function is as follows. Master enzyme that delivers sulfur to a number of partners involved in Fe-S cluster assembly, tRNA modification or cofactor biosynthesis. Catalyzes the removal of elemental sulfur atoms from cysteine to produce alanine. Functions as a sulfur delivery protein for Fe-S cluster synthesis onto IscU, an Fe-S scaffold assembly protein, as well as other S acceptor proteins. The chain is Cysteine desulfurase IscS from Photobacterium profundum (strain SS9).